The following is a 125-amino-acid chain: Thioredoxin H-type (125 aa).

Residues 2-112 (AEGNVFACHS…LERKVAALAA (111 aa)) form the Thioredoxin domain. Active-site nucleophile residues include Cys-38 and Cys-41. Cys-38 and Cys-41 form a disulfide bridge.

This sequence belongs to the thioredoxin family. Plant H-type subfamily.

It is found in the cytoplasm. Functionally, participates in various redox reactions through the reversible oxidation of the active center dithiol to a disulfide. The H form is known to activate a number of cytosolic enzymes. This is Thioredoxin H-type (SB09) from Picea mariana (Black spruce).